Consider the following 94-residue polypeptide: Parvalbumin beta 4 (94 aa).

The residue at position 1 (Ala1) is an N-acetylalanine. 2 EF-hand domains span residues 36–63 (FFAI…FSAG) and 67–94 (LSDA…EFAA). Residues Asp41, Asp43, Ser45, Phe47, Glu49, Glu52, Asp80, Asp82, Asp84, Met86, and Glu91 each contribute to the Ca(2+) site.

The protein belongs to the parvalbumin family.

In terms of biological role, in muscle, parvalbumin is thought to be involved in relaxation after contraction. It binds two calcium ions. This chain is Parvalbumin beta 4, found in Merluccius bilinearis (Silver hake).